The following is a 170-amino-acid chain: MFSKTLVVLAAVAAVTVNGLTKEECDAAFTGEVGKLTKDALPLVQPCSSDSGFSMVPPKGLPTDDQYVKMCASKNCRDLLDVIKKAGLKDCELNFGSVFPGSVPLNVYQLGQGFDAKCASIGGGSTPTTAPPTSTTPTTAPPTGTTPTTAPPAGTTPGVTPSPTTPKPAC.

Residues 1-19 (MFSKTLVVLAAVAAVTVNG) form the signal peptide. 3 cysteine pairs are disulfide-bonded: C25–C91, C47–C76, and C71–C118. The tract at residues 122–170 (GGGSTPTTAPPTSTTPTTAPPTGTTPTTAPPAGTTPGVTPSPTTPKPAC) is disordered. The segment covering 126 to 162 (TPTTAPPTSTTPTTAPPTGTTPTTAPPAGTTPGVTPS) has biased composition (low complexity).

Belongs to the elicitin family.

It localises to the secreted. Functionally, induces local and distal defense responses (incompatible hypersensitive reaction) in plants from the solanaceae and cruciferae families. Elicits leaf necrosis and causes the accumulation of pathogenesis-related proteins. Might interact with the lipidic molecules of the plasma membrane. In Pythium oligandrum (Mycoparasitic fungus), this protein is Elicitin-like protein 1 (POD-1).